Consider the following 423-residue polypeptide: TNF receptor-associated factor family protein DDB_G0277243 (423 aa).

The segment at 20 to 66 (CSICVDPVLNSLPLEQHQALSCKNGHLLCQACWGKQLALRKECCICK) adopts an RING-type; degenerate zinc-finger fold. 2 consecutive TRAF-type zinc fingers follow at residues 124–179 (SHLR…NDMP) and 180–237 (THIE…CYLS). An MATH domain is found at 287 to 411 (RYKGNWTIEN…DGKLTINIDV (125 aa)).

It belongs to the TNF receptor-associated factor family. A subfamily.

Its subcellular location is the cytoplasm. Probable adapter protein and signal transducer that links members of the tumor necrosis factor receptor family to different signaling pathways by association with the receptor cytoplasmic domain and kinases. In Dictyostelium discoideum (Social amoeba), this protein is TNF receptor-associated factor family protein DDB_G0277243.